Here is a 117-residue protein sequence, read N- to C-terminus: Aspartate 1-decarboxylase (117 aa).

The active-site Schiff-base intermediate with substrate; via pyruvic acid is serine 25. Serine 25 is subject to Pyruvic acid (Ser). A substrate-binding site is contributed by threonine 57. Residue tyrosine 58 is the Proton donor of the active site. Residue 72-74 (GAA) participates in substrate binding.

The protein belongs to the PanD family. Heterooctamer of four alpha and four beta subunits. Requires pyruvate as cofactor. Post-translationally, is synthesized initially as an inactive proenzyme, which is activated by self-cleavage at a specific serine bond to produce a beta-subunit with a hydroxyl group at its C-terminus and an alpha-subunit with a pyruvoyl group at its N-terminus.

It is found in the cytoplasm. It carries out the reaction L-aspartate + H(+) = beta-alanine + CO2. Its pathway is cofactor biosynthesis; (R)-pantothenate biosynthesis; beta-alanine from L-aspartate: step 1/1. In terms of biological role, catalyzes the pyruvoyl-dependent decarboxylation of aspartate to produce beta-alanine. This is Aspartate 1-decarboxylase from Helicobacter pylori (strain J99 / ATCC 700824) (Campylobacter pylori J99).